The primary structure comprises 145 residues: MTLTNYVQEVSLADFGKPLHHKAYWNKRLKTTGGRFFPKDGHLDFNPRMLEEHGELIFRKIVRHELCHYHLYFEGRGYHHKDRDFKDLLAQVNGLRYVPTSSKSKTNHHYSCQTCGQVYQRKRRINLAKYVCGNCHGKLMEKNQS.

Positions 4–140 (TNYVQEVSLA…VCGNCHGKLM (137 aa)) constitute a SprT-like domain. Residue H64 participates in Zn(2+) binding. E65 is an active-site residue. Residue H68 participates in Zn(2+) binding.

Belongs to the SprT family. Zn(2+) serves as cofactor.

The protein resides in the cytoplasm. This is Protein SprT-like from Streptococcus pyogenes serotype M1.